The following is a 132-amino-acid chain: MKGLGIKVPRAVSTGTKLTCADNTGARVVQVVSVFGYHGVRRRQPKLGLADIATVSVKKGTPDMRRKLVRAVVIRQKKEIRRPSGLRLSFEDNAVVVVDDKNEPRGTEIKGPVAREVAIRYPRIGSMATIIV.

It belongs to the universal ribosomal protein uL14 family. Part of the 50S ribosomal subunit. Forms a cluster with proteins L3 and L24e, part of which may contact the 16S rRNA in 2 intersubunit bridges.

Binds to 23S rRNA. Forms part of two intersubunit bridges in the 70S ribosome. The sequence is that of Large ribosomal subunit protein uL14 from Methanospirillum hungatei JF-1 (strain ATCC 27890 / DSM 864 / NBRC 100397 / JF-1).